Consider the following 347-residue polypeptide: S-adenosylmethionine:tRNA ribosyltransferase-isomerase (347 aa).

This sequence belongs to the QueA family. In terms of assembly, monomer.

It is found in the cytoplasm. It carries out the reaction 7-aminomethyl-7-carbaguanosine(34) in tRNA + S-adenosyl-L-methionine = epoxyqueuosine(34) in tRNA + adenine + L-methionine + 2 H(+). The protein operates within tRNA modification; tRNA-queuosine biosynthesis. Functionally, transfers and isomerizes the ribose moiety from AdoMet to the 7-aminomethyl group of 7-deazaguanine (preQ1-tRNA) to give epoxyqueuosine (oQ-tRNA). This Pseudomonas aeruginosa (strain LESB58) protein is S-adenosylmethionine:tRNA ribosyltransferase-isomerase.